Here is a 311-residue protein sequence, read N- to C-terminus: HPr kinase/phosphorylase (311 aa).

Active-site residues include H138 and K159. ATP is bound at residue 153–160 (GSSGIGKS). S160 contributes to the Mg(2+) binding site. Residue D177 is the Proton acceptor; for phosphorylation activity. Proton donor; for dephosphorylation activity of the active site. An important for the catalytic mechanism of both phosphorylation and dephosphorylation region spans residues 201–210 (LEIRGVGIIN). A Mg(2+)-binding site is contributed by E202. R243 is an active-site residue. Positions 264 to 269 (PVRPGR) are important for the catalytic mechanism of dephosphorylation.

It belongs to the HPrK/P family. In terms of assembly, homohexamer. Mg(2+) is required as a cofactor.

It carries out the reaction [HPr protein]-L-serine + ATP = [HPr protein]-O-phospho-L-serine + ADP + H(+). The enzyme catalyses [HPr protein]-O-phospho-L-serine + phosphate + H(+) = [HPr protein]-L-serine + diphosphate. Its function is as follows. Catalyzes the ATP- as well as the pyrophosphate-dependent phosphorylation of a specific serine residue in HPr, a phosphocarrier protein of the phosphoenolpyruvate-dependent sugar phosphotransferase system (PTS). HprK/P also catalyzes the pyrophosphate-producing, inorganic phosphate-dependent dephosphorylation (phosphorolysis) of seryl-phosphorylated HPr (P-Ser-HPr). The two antagonistic activities of HprK/P are regulated by several intracellular metabolites, which change their concentration in response to the absence or presence of rapidly metabolisable carbon sources (glucose, fructose, etc.) in the growth medium. Therefore, by controlling the phosphorylation state of HPr, HPrK/P is a sensor enzyme that plays a major role in the regulation of carbon metabolism and sugar transport: it mediates carbon catabolite repression (CCR), and regulates PTS-catalyzed carbohydrate uptake and inducer exclusion. The chain is HPr kinase/phosphorylase from Brevibacillus brevis (strain 47 / JCM 6285 / NBRC 100599).